The following is a 107-amino-acid chain: Histone H4 (107 aa).

Residues 1-16 (MPGRGKGGKGGKGYGK) are compositionally biased toward gly residues. The tract at residues 1-23 (MPGRGKGGKGGKGYGKVGAKRHA) is disordered. The DNA-binding element occupies 17-21 (VGAKR).

Belongs to the histone H4 family. In terms of assembly, the nucleosome is a histone octamer containing two molecules each of H2A, H2B, H3 and H4 assembled in one H3-H4 heterotetramer and two H2A-H2B heterodimers. The octamer wraps approximately 147 bp of DNA.

It localises to the nucleus. The protein localises to the chromosome. Its function is as follows. Core component of nucleosome. Nucleosomes wrap and compact DNA into chromatin, limiting DNA accessibility to the cellular machineries which require DNA as a template. Histones thereby play a central role in transcription regulation, DNA repair, DNA replication and chromosomal stability. DNA accessibility is regulated via a complex set of post-translational modifications of histones, also called histone code, and nucleosome remodeling. The protein is Histone H4 of Euplotes crassus.